The primary structure comprises 803 residues: Leucine--tRNA ligase (803 aa).

A 'HIGH' region motif is present at residues 40 to 51 (PYPSGAGLHVGH). Positions 575 to 579 (KMSKS) match the 'KMSKS' region motif. Position 578 (K578) interacts with ATP.

Belongs to the class-I aminoacyl-tRNA synthetase family.

It localises to the cytoplasm. It catalyses the reaction tRNA(Leu) + L-leucine + ATP = L-leucyl-tRNA(Leu) + AMP + diphosphate. The polypeptide is Leucine--tRNA ligase (Listeria monocytogenes serotype 4a (strain HCC23)).